A 57-amino-acid polypeptide reads, in one-letter code: Large ribosomal subunit protein eL37 (57 aa).

Positions 20, 23, 35, and 38 each coordinate Zn(2+). The C4-type zinc-finger motif lies at cysteine 20 to cysteine 38.

This sequence belongs to the eukaryotic ribosomal protein eL37 family. The cofactor is Zn(2+).

Functionally, binds to the 23S rRNA. In Natronomonas pharaonis (strain ATCC 35678 / DSM 2160 / CIP 103997 / JCM 8858 / NBRC 14720 / NCIMB 2260 / Gabara) (Halobacterium pharaonis), this protein is Large ribosomal subunit protein eL37.